A 397-amino-acid chain; its full sequence is Cytochrome b (397 aa).

4 helical membrane-spanning segments follow: residues 48 to 68 (FGSM…LLSA), 92 to 113 (WMLR…YAHI), 128 to 148 (WYFG…GYTL), and 193 to 213 (FYTL…LHLF). Heme b-binding residues include H98 and H112. Heme b-binding residues include H197 and H211. Residue H216 coordinates a ubiquinone. Transmembrane regions (helical) follow at residues 241-261 (IKDL…VCVD), 303-323 (AGGV…PTLH), 335-355 (LNQV…WIGA), and 362-382 (YIIL…WTPF).

Belongs to the cytochrome b family. In terms of assembly, the main subunits of complex b-c1 are: cytochrome b, cytochrome c1 and the Rieske protein. Heme b serves as cofactor.

The protein resides in the mitochondrion inner membrane. Its function is as follows. Component of the ubiquinol-cytochrome c reductase complex (complex III or cytochrome b-c1 complex) that is part of the mitochondrial respiratory chain. The b-c1 complex mediates electron transfer from ubiquinol to cytochrome c. Contributes to the generation of a proton gradient across the mitochondrial membrane that is then used for ATP synthesis. The sequence is that of Cytochrome b (MT-CYB) from Mytilus edulis (Blue mussel).